A 271-amino-acid polypeptide reads, in one-letter code: Urease accessory protein UreD (271 aa).

It belongs to the UreD family. As to quaternary structure, ureD, UreF and UreG form a complex that acts as a GTP-hydrolysis-dependent molecular chaperone, activating the urease apoprotein by helping to assemble the nickel containing metallocenter of UreC. The UreE protein probably delivers the nickel.

It is found in the cytoplasm. Its function is as follows. Required for maturation of urease via the functional incorporation of the urease nickel metallocenter. The polypeptide is Urease accessory protein UreD (Bacillus sp. (strain TB-90)).